The chain runs to 219 residues: Probable transaldolase (219 aa).

The Schiff-base intermediate with substrate role is filled by Lys83.

It belongs to the transaldolase family. Type 3B subfamily.

The protein resides in the cytoplasm. The catalysed reaction is D-sedoheptulose 7-phosphate + D-glyceraldehyde 3-phosphate = D-erythrose 4-phosphate + beta-D-fructose 6-phosphate. It participates in carbohydrate degradation; pentose phosphate pathway; D-glyceraldehyde 3-phosphate and beta-D-fructose 6-phosphate from D-ribose 5-phosphate and D-xylulose 5-phosphate (non-oxidative stage): step 2/3. In terms of biological role, transaldolase is important for the balance of metabolites in the pentose-phosphate pathway. The protein is Probable transaldolase of Cereibacter sphaeroides (strain ATCC 17025 / ATH 2.4.3) (Rhodobacter sphaeroides).